The sequence spans 223 residues: Ribosomal RNA small subunit methyltransferase G (223 aa).

3 residues coordinate S-adenosyl-L-methionine: Gly85, Phe90, and Arg154.

This sequence belongs to the methyltransferase superfamily. RNA methyltransferase RsmG family.

It localises to the cytoplasm. It catalyses the reaction guanosine(527) in 16S rRNA + S-adenosyl-L-methionine = N(7)-methylguanosine(527) in 16S rRNA + S-adenosyl-L-homocysteine. Specifically methylates the N7 position of guanine in position 527 of 16S rRNA. This chain is Ribosomal RNA small subunit methyltransferase G, found in Rhodopseudomonas palustris (strain ATCC BAA-98 / CGA009).